A 148-amino-acid polypeptide reads, in one-letter code: Snaclec 6 (148 aa).

The first 23 residues, 1–23 (MGRFIFVSFGLLVMFLSLSGTEA), serve as a signal peptide directing secretion. 3 cysteine pairs are disulfide-bonded: C27–C38, C55–C144, and C121–C136. The C-type lectin domain maps to 34-145 (YDQNCYKAFE…CSGTHNFVCK (112 aa)). The N-linked (GlcNAc...) asparagine glycan is linked to N130.

This sequence belongs to the snaclec family. As to quaternary structure, heterodimer; disulfide-linked. Expressed by the venom gland.

It localises to the secreted. Interferes with one step of hemostasis (modulation of platelet aggregation, or coagulation cascade, for example). This Bitis arietans (African puff adder) protein is Snaclec 6.